The following is a 628-amino-acid chain: Netrin-4 (628 aa).

A signal peptide spans methionine 1–alanine 18. Residues cysteine 30–serine 261 enclose the Laminin N-terminal domain. N-linked (GlcNAc...) asparagine glycosylation is found at asparagine 56 and asparagine 163. Cystine bridges form between cysteine 262/cysteine 271, cysteine 264/cysteine 293, cysteine 295/cysteine 304, cysteine 307/cysteine 329, cysteine 332/cysteine 341, cysteine 334/cysteine 359, cysteine 362/cysteine 371, cysteine 374/cysteine 392, cysteine 395/cysteine 413, cysteine 397/cysteine 420, cysteine 422/cysteine 431, and cysteine 434/cysteine 446. 3 Laminin EGF-like domains span residues cysteine 262–threonine 331, cysteine 332–proline 394, and cysteine 395–proline 448. An N-linked (GlcNAc...) asparagine glycan is attached at asparagine 353. N-linked (GlcNAc...) asparagine glycosylation occurs at asparagine 483. Disulfide bonds link cysteine 506/cysteine 576 and cysteine 520/cysteine 627. Residues cysteine 506–cysteine 627 form the NTR domain.

May form a homodimer.

It is found in the secreted. Its subcellular location is the extracellular space. The protein localises to the extracellular matrix. May play an important role in neural, kidney and vascular development. This Pongo abelii (Sumatran orangutan) protein is Netrin-4 (NTN4).